The primary structure comprises 569 residues: Urease subunit alpha (569 aa).

In terms of domain architecture, Urease spans 131-569 (GAIDSHIHFI…LPLAQRYLLL (439 aa)). 3 residues coordinate Ni(2+): histidine 136, histidine 138, and lysine 219. Lysine 219 is subject to N6-carboxylysine. Position 221 (histidine 221) interacts with substrate. 2 residues coordinate Ni(2+): histidine 248 and histidine 274. Catalysis depends on histidine 322, which acts as the Proton donor. Aspartate 362 contacts Ni(2+).

It belongs to the metallo-dependent hydrolases superfamily. Urease alpha subunit family. Heterotrimer of UreA (gamma), UreB (beta) and UreC (alpha) subunits. Three heterotrimers associate to form the active enzyme. The cofactor is Ni cation. Post-translationally, carboxylation allows a single lysine to coordinate two nickel ions.

It localises to the cytoplasm. The enzyme catalyses urea + 2 H2O + H(+) = hydrogencarbonate + 2 NH4(+). It functions in the pathway nitrogen metabolism; urea degradation; CO(2) and NH(3) from urea (urease route): step 1/1. This is Urease subunit alpha from Prochlorococcus marinus (strain NATL1A).